Here is a 476-residue protein sequence, read N- to C-terminus: Aspartyl/glutamyl-tRNA(Asn/Gln) amidotransferase subunit B (476 aa).

Belongs to the GatB/GatE family. GatB subfamily. In terms of assembly, heterotrimer of A, B and C subunits.

It carries out the reaction L-glutamyl-tRNA(Gln) + L-glutamine + ATP + H2O = L-glutaminyl-tRNA(Gln) + L-glutamate + ADP + phosphate + H(+). The catalysed reaction is L-aspartyl-tRNA(Asn) + L-glutamine + ATP + H2O = L-asparaginyl-tRNA(Asn) + L-glutamate + ADP + phosphate + 2 H(+). In terms of biological role, allows the formation of correctly charged Asn-tRNA(Asn) or Gln-tRNA(Gln) through the transamidation of misacylated Asp-tRNA(Asn) or Glu-tRNA(Gln) in organisms which lack either or both of asparaginyl-tRNA or glutaminyl-tRNA synthetases. The reaction takes place in the presence of glutamine and ATP through an activated phospho-Asp-tRNA(Asn) or phospho-Glu-tRNA(Gln). This is Aspartyl/glutamyl-tRNA(Asn/Gln) amidotransferase subunit B from Albidiferax ferrireducens (strain ATCC BAA-621 / DSM 15236 / T118) (Rhodoferax ferrireducens).